Reading from the N-terminus, the 34-residue chain is Conotoxin S4.3 (34 aa).

Q1 carries the post-translational modification Pyrrolidone carboxylic acid. A 4-carboxyglutamate modification is found at E3. S7 carries an O-linked (HexNAc...) serine glycan. T9 carries O-linked (HexNAc...) threonine glycosylation. 4-hydroxyproline is present on residues P17, P22, P31, and P32.

It belongs to the conotoxin A superfamily. Contains 3 disulfide bonds. As to expression, expressed by the venom duct.

The protein localises to the secreted. Its function is as follows. Probable neurotoxin with ion channel inhibitor activity. This is Conotoxin S4.3 from Conus striatus (Striated cone).